Reading from the N-terminus, the 168-residue chain is uncharacterized protein (168 aa).

2 helical membrane passes run Ile4 to Glu24 and Ile94 to Trp114.

It to A.aeolicus aq_1446.

The protein localises to the cell membrane. This is an uncharacterized protein from Aquifex aeolicus (strain VF5).